A 450-amino-acid chain; its full sequence is tRNA modification GTPase MnmE (450 aa).

(6S)-5-formyl-5,6,7,8-tetrahydrofolate-binding residues include R25, E83, and K122. One can recognise a TrmE-type G domain in the interval 218–377 (GFKVAIIGKP…QMEALLDSIG (160 aa)). K(+) is bound at residue N228. Residues 228–233 (NVGKSS), 247–253 (SDIAGTT), and 272–275 (DTAG) each bind GTP. S232 is a Mg(2+) binding site. S247, I249, and T252 together coordinate K(+). T253 provides a ligand contact to Mg(2+). Residue K450 participates in (6S)-5-formyl-5,6,7,8-tetrahydrofolate binding.

The protein belongs to the TRAFAC class TrmE-Era-EngA-EngB-Septin-like GTPase superfamily. TrmE GTPase family. As to quaternary structure, homodimer. Heterotetramer of two MnmE and two MnmG subunits. Requires K(+) as cofactor.

Its subcellular location is the cytoplasm. Exhibits a very high intrinsic GTPase hydrolysis rate. Involved in the addition of a carboxymethylaminomethyl (cmnm) group at the wobble position (U34) of certain tRNAs, forming tRNA-cmnm(5)s(2)U34. The chain is tRNA modification GTPase MnmE from Sulfurovum sp. (strain NBC37-1).